Here is a 291-residue protein sequence, read N- to C-terminus: ATP synthase gamma chain (291 aa).

Belongs to the ATPase gamma chain family. As to quaternary structure, F-type ATPases have 2 components, CF(1) - the catalytic core - and CF(0) - the membrane proton channel. CF(1) has five subunits: alpha(3), beta(3), gamma(1), delta(1), epsilon(1). CF(0) has three main subunits: a, b and c.

It is found in the cell inner membrane. Produces ATP from ADP in the presence of a proton gradient across the membrane. The gamma chain is believed to be important in regulating ATPase activity and the flow of protons through the CF(0) complex. In Rhodopseudomonas palustris (strain BisB5), this protein is ATP synthase gamma chain.